The primary structure comprises 457 residues: Glucuronide carrier protein homolog (457 aa).

Topologically, residues 1-11 (MNQQLSWRTIV) are cytoplasmic. Residues 12–34 (GYSLGDVANNFAFAMGALFLLSY) form a helical membrane-spanning segment. Topologically, residues 35–37 (YTD) are periplasmic. Residues 38–60 (VAGVGAAAAGTMLLLVRVFDAFA) traverse the membrane as a helical segment. The Cytoplasmic portion of the chain corresponds to 61–79 (DVFAGRVVDSVNTRWGKFR). Residues 80–100 (PFLLFGTAPLMIFSVLVFWVL) traverse the membrane as a helical segment. The Periplasmic segment spans residues 101–108 (TDWSHGSK). A helical transmembrane segment spans residues 109–129 (VVYAYLTYMGLGLCYSLVNIP). Over 130 to 146 (YGSLATAMTQQPQSRAR) the chain is Cytoplasmic. The chain crosses the membrane as a helical span at residues 147–167 (LGAARGIAASLTFVCLAFLIG). Residues 168–180 (PSIKNSSPEEMVS) lie on the Periplasmic side of the membrane. The helical transmembrane segment at 181–201 (VYHFWTIVLAIAGMVLYFICF) threads the bilayer. Topologically, residues 202 to 228 (KSTRENVVRIVAQPSLNISLQTLKRNR) are cytoplasmic. The helical transmembrane segment at 229-249 (PLFMLCIGALCVLISTFAVSA) threads the bilayer. At 250–263 (SSLFYVRYVLNDTG) the chain is on the periplasmic side. Residues 264 to 284 (LFTVLVLVQNLVGTVASAPLV) traverse the membrane as a helical segment. Residues 285–296 (PGMVARIGKKNT) are Cytoplasmic-facing. The chain crosses the membrane as a helical span at residues 297-316 (FLIGALLGTCGYLLFFWVSV). Residues 317–320 (WSLP) lie on the Periplasmic side of the membrane. Residues 321–343 (VALVALAIASIGQGVTMTVMWAL) traverse the membrane as a helical segment. Residues 344 to 372 (EADTVEYGEYLTGVRIEGLTYSLFSFTRK) lie on the Cytoplasmic side of the membrane. A helical membrane pass occupies residues 373-393 (CGQAIGGSIPAFILGLSGYIA). At 394 to 408 (NQVQTPEVIMGIRTS) the chain is on the periplasmic side. The helical transmembrane segment at 409 to 429 (IALVPCGFMLLAFVIIWFYPL) threads the bilayer. Over 430–457 (TDKKFKEIVVEIDNRKKVQQQLISDITN) the chain is Cytoplasmic.

Belongs to the sodium:galactoside symporter (TC 2.A.2) family.

It localises to the cell inner membrane. This Escherichia coli (strain K12) protein is Glucuronide carrier protein homolog (uidB).